Here is a 218-residue protein sequence, read N- to C-terminus: uncharacterized protein (218 aa).

The protein belongs to the HAD-like hydrolase superfamily.

Its subcellular location is the cytoplasm. It is found in the nucleus. This is an uncharacterized protein from Saccharomyces cerevisiae (strain ATCC 204508 / S288c) (Baker's yeast).